Here is a 64-residue protein sequence, read N- to C-terminus: uncharacterized protein (64 aa).

This is an uncharacterized protein from Bacillus subtilis (strain 168).